The chain runs to 753 residues: Probable tubulin--tyrosine ligase PBY1 (753 aa).

The TTL domain maps to 343–734 (MEYIYKPLTH…PIFNENRNKT (392 aa)).

The protein belongs to the tubulin--tyrosine ligase family. It depends on Mg(2+) as a cofactor. K(+) serves as cofactor.

The protein resides in the cytoplasm. Its subcellular location is the P-body. The enzyme catalyses C-terminal L-alpha-aminoacyl-L-glutamyl-L-glutamyl-[tubulin] + L-tyrosine + ATP = C-terminal L-alpha-aminoacyl-L-glutamyl-L-glutamyl-L-tyrosyl-[tubulin] + ADP + phosphate + H(+). In terms of biological role, probable P-body-associated tubulin--tyrosine ligase. The protein is Probable tubulin--tyrosine ligase PBY1 (PBY1) of Saccharomyces cerevisiae (strain ATCC 204508 / S288c) (Baker's yeast).